A 694-amino-acid chain; its full sequence is Prolyl 3-hydroxylase 2 (694 aa).

The N-terminal stretch at 1–23 (MAPGSRSWGAVLLLAAMLPAACG) is a signal peptide. TPR repeat units lie at residues 35–68 (FDAL…RREL), 136–169 (RVPY…NPEH), 196–229 (HMED…YYAE), and 292–325 (PLHY…HPDD). The stretch at 386-418 (KRYGARQDEHSVPSSISSEPEDGPRLSLTKKPT) forms a coiled coil. Residues 395–427 (HSVPSSISSEPEDGPRLSLTKKPTPKPDRELKE) form a disordered region. N446 and N535 each carry an N-linked (GlcNAc...) asparagine glycan. The 115-residue stretch at 543–657 (THLVCRTALS…RCAVALWFTL (115 aa)) folds into the Fe2OG dioxygenase domain. Positions 566, 568, and 638 each coordinate Fe cation. Residue R648 is part of the active site. Residues 691-694 (KDEL) carry the Prevents secretion from ER motif.

Belongs to the leprecan family. Requires Fe cation as cofactor. L-ascorbate serves as cofactor.

It is found in the endoplasmic reticulum. Its subcellular location is the sarcoplasmic reticulum. It localises to the golgi apparatus. It carries out the reaction L-prolyl-[collagen] + 2-oxoglutarate + O2 = trans-3-hydroxy-L-prolyl-[collagen] + succinate + CO2. Functionally, prolyl 3-hydroxylase that catalyzes the post-translational formation of 3-hydroxyproline on collagens. Contributes to proline 3-hydroxylation of collagen COL4A1 and COL1A1 in tendons, the eye sclera and in the eye lens capsule. Has high activity with the type IV collagen COL4A1, and lower activity with COL1A1. Catalyzes hydroxylation of the first Pro in Gly-Pro-Hyp sequences where Hyp is 4-hydroxyproline. Has no activity on substrates that lack 4-hydroxyproline in the third position. The sequence is that of Prolyl 3-hydroxylase 2 from Gallus gallus (Chicken).